Consider the following 777-residue polypeptide: Intraflagellar transport protein 80 homolog (777 aa).

7 WD repeats span residues 12–50, 104–143, 145–185, 186–225, 227–265, 267–306, and 504–542; these read KHQE…TSLI, AHCG…RSTL, QQGI…LQWK, AHDG…LYGS, PHEH…YALE, PNTG…WEWK, and KLGT…YVDR. The tract at residues 758 to 777 is disordered; sequence TKERDRSSSGQSSKNTGLKP. Residues 765-777 are compositionally biased toward polar residues; that stretch reads SSGQSSKNTGLKP.

As to quaternary structure, component of the IFT complex B, at least composed of IFT20, IFT22, IFT25, IFT27, IFT46, IFT52, TRAF3IP1/IFT54, IFT57, IFT74, IFT80, IFT81, and IFT88. Interacts with IFT88. Interacts with IFT57 and IFT70B.

It localises to the cytoplasm. Its subcellular location is the cytoskeleton. The protein localises to the cilium basal body. The protein resides in the cilium axoneme. Its function is as follows. Component of the intraflagellar transport (IFT) complex B, which is essential for the development and maintenance of motile and sensory cilia. This is Intraflagellar transport protein 80 homolog (Ift80) from Rattus norvegicus (Rat).